A 738-amino-acid polypeptide reads, in one-letter code: 1,4-alpha-glucan branching enzyme GlgB (738 aa).

The active-site Nucleophile is Asp399. The active-site Proton donor is Glu452.

The protein belongs to the glycosyl hydrolase 13 family. GlgB subfamily. As to quaternary structure, monomer.

It carries out the reaction Transfers a segment of a (1-&gt;4)-alpha-D-glucan chain to a primary hydroxy group in a similar glucan chain.. Its pathway is glycan biosynthesis; glycogen biosynthesis. In terms of biological role, catalyzes the formation of the alpha-1,6-glucosidic linkages in glycogen by scission of a 1,4-alpha-linked oligosaccharide from growing alpha-1,4-glucan chains and the subsequent attachment of the oligosaccharide to the alpha-1,6 position. In Chlamydia trachomatis serovar L2b (strain UCH-1/proctitis), this protein is 1,4-alpha-glucan branching enzyme GlgB.